A 69-amino-acid chain; its full sequence is uncharacterized protein (69 aa).

A signal peptide spans 1–21 (MNTKFILILLVLIISTIFVNS).

It is found in the secreted. This is an uncharacterized protein from Dictyostelium discoideum (Social amoeba).